We begin with the raw amino-acid sequence, 380 residues long: Cytochrome b (380 aa).

Helical transmembrane passes span 34–54, 78–99, 114–134, and 179–199; these read FGSL…LLAM, WLIR…YLHI, WNTG…GYVL, and FFAL…IHLT. 2 residues coordinate heme b: His84 and His98. Heme b-binding residues include His183 and His197. Position 202 (His202) interacts with a ubiquinone. Transmembrane regions (helical) follow at residues 227-247, 289-309, 321-341, and 348-368; these read LKDI…ALFS, LGGV…PFLH, ISQL…WVGS, and FIII…VLFP.

It belongs to the cytochrome b family. The cytochrome bc1 complex contains 11 subunits: 3 respiratory subunits (MT-CYB, CYC1 and UQCRFS1), 2 core proteins (UQCRC1 and UQCRC2) and 6 low-molecular weight proteins (UQCRH/QCR6, UQCRB/QCR7, UQCRQ/QCR8, UQCR10/QCR9, UQCR11/QCR10 and a cleavage product of UQCRFS1). This cytochrome bc1 complex then forms a dimer. Heme b serves as cofactor.

Its subcellular location is the mitochondrion inner membrane. In terms of biological role, component of the ubiquinol-cytochrome c reductase complex (complex III or cytochrome b-c1 complex) that is part of the mitochondrial respiratory chain. The b-c1 complex mediates electron transfer from ubiquinol to cytochrome c. Contributes to the generation of a proton gradient across the mitochondrial membrane that is then used for ATP synthesis. This Pelecanoides georgicus (South Georgia diving petrel) protein is Cytochrome b (MT-CYB).